The primary structure comprises 576 residues: Putative pentatricopeptide repeat-containing protein At5g47460 (576 aa).

PPR repeat units lie at residues 20–53 (SSNS…GEKP), 54–88 (DASP…GFVS), 89–119 (NTRL…MPDP), 120–154 (DVIS…DVFP), 155–189 (NEFS…GLEK), 191–225 (NVVV…DTVS), 226–252 (WNAI…MPNP), 253–287 (DTVT…NSSS), 288–318 (WNTI…GVRF), 319–353 (DEYS…GLDS), 354–384 (RVVV…MPRK), 385–419 (NLIV…RFLK), 421–452 (DRFT…MINE), and 458–488 (SVEH…FGFG). Positions 493–570 (AWRALLGACS…EVGSSWIDSR (78 aa)) are type E motif.

The protein belongs to the PPR family. PCMP-E subfamily.

In Arabidopsis thaliana (Mouse-ear cress), this protein is Putative pentatricopeptide repeat-containing protein At5g47460 (PCMP-E103).